The following is a 281-amino-acid chain: NADPH-dependent 7-cyano-7-deazaguanine reductase (281 aa).

88 to 90 (VES) is a substrate binding site. 90–91 (SK) contributes to the NADPH binding site. Residue cysteine 189 is the Thioimide intermediate of the active site. The active-site Proton donor is aspartate 196. Residue 228 to 229 (HE) coordinates substrate. 257–258 (RG) contacts NADPH.

The protein belongs to the GTP cyclohydrolase I family. QueF type 2 subfamily. Homodimer.

It is found in the cytoplasm. It carries out the reaction 7-aminomethyl-7-carbaguanine + 2 NADP(+) = 7-cyano-7-deazaguanine + 2 NADPH + 3 H(+). It participates in tRNA modification; tRNA-queuosine biosynthesis. Its function is as follows. Catalyzes the NADPH-dependent reduction of 7-cyano-7-deazaguanine (preQ0) to 7-aminomethyl-7-deazaguanine (preQ1). This chain is NADPH-dependent 7-cyano-7-deazaguanine reductase, found in Cronobacter sakazakii (strain ATCC BAA-894) (Enterobacter sakazakii).